Here is an 89-residue protein sequence, read N- to C-terminus: Exodeoxyribonuclease 7 small subunit (89 aa).

Residues 1-23 are disordered; that stretch reads MRPWRCVSMAKAPAAPSSTQPDP.

It belongs to the XseB family. In terms of assembly, heterooligomer composed of large and small subunits.

It is found in the cytoplasm. The enzyme catalyses Exonucleolytic cleavage in either 5'- to 3'- or 3'- to 5'-direction to yield nucleoside 5'-phosphates.. Bidirectionally degrades single-stranded DNA into large acid-insoluble oligonucleotides, which are then degraded further into small acid-soluble oligonucleotides. The sequence is that of Exodeoxyribonuclease 7 small subunit from Acidovorax sp. (strain JS42).